The chain runs to 1520 residues: DNA-directed RNA polymerase subunit beta'' (1520 aa).

Cys220, Cys296, Cys303, and Cys306 together coordinate Zn(2+). Composition is skewed to basic and acidic residues over residues 645 to 654 (TREEEYRTRE) and 664 to 674 (PENKYRTREGE). Disordered stretches follow at residues 645-676 (TREE…GEGE) and 705-786 (YRTL…KKEG). Composition is skewed to acidic residues over residues 730-748 (GEYE…SSED) and 756-779 (TLEE…PEED).

Belongs to the RNA polymerase beta' chain family. RpoC2 subfamily. As to quaternary structure, in plastids the minimal PEP RNA polymerase catalytic core is composed of four subunits: alpha, beta, beta', and beta''. When a (nuclear-encoded) sigma factor is associated with the core the holoenzyme is formed, which can initiate transcription. The cofactor is Zn(2+).

The protein resides in the plastid. It localises to the chloroplast. The enzyme catalyses RNA(n) + a ribonucleoside 5'-triphosphate = RNA(n+1) + diphosphate. Its function is as follows. DNA-dependent RNA polymerase catalyzes the transcription of DNA into RNA using the four ribonucleoside triphosphates as substrates. This is DNA-directed RNA polymerase subunit beta'' from Sorghum bicolor (Sorghum).